The sequence spans 85 residues: Conotoxin MaIr94 (85 aa).

The first 22 residues, 1 to 22 (MKLTCVLIITVLFLTACQLTAA), serve as a signal peptide directing secretion. A propeptide spanning residues 23–49 (GNSRDKQEDPVVRSSGEVQRSEDIKLA) is cleaved from the precursor. Intrachain disulfides connect cysteine 52/cysteine 69, cysteine 59/cysteine 73, and cysteine 68/cysteine 84.

Belongs to the conotoxin O1 superfamily. In terms of tissue distribution, expressed by the venom duct.

It is found in the secreted. Its function is as follows. Produces no obvious effect on ionic currents when tested on the mouse dorsal rooted ganglia (DRG). In Conus marmoreus (Marble cone), this protein is Conotoxin MaIr94.